Reading from the N-terminus, the 333-residue chain is Late embryogenesis abundant protein 1 (333 aa).

2 disordered regions span residues methionine 1–alanine 20 and lysine 116–glutamine 246. Residues serine 3–arginine 52 are a coiled coil. Basic and acidic residues-rich tracts occupy residues lysine 116–valine 163, glutamate 172–lysine 219, and aspartate 227–aspartate 241.

This sequence belongs to the LEA type 4 family.

The sequence is that of Late embryogenesis abundant protein 1 (LEA1) from Oryza sativa subsp. indica (Rice).